We begin with the raw amino-acid sequence, 1342 residues long: DNA-directed RNA polymerase subunit beta (1342 aa).

N6-acetyllysine is present on residues Lys1022 and Lys1200.

This sequence belongs to the RNA polymerase beta chain family. As to quaternary structure, the RNAP catalytic core consists of 2 alpha, 1 beta, 1 beta' and 1 omega subunit. When a sigma factor is associated with the core the holoenzyme is formed, which can initiate transcription.

It catalyses the reaction RNA(n) + a ribonucleoside 5'-triphosphate = RNA(n+1) + diphosphate. In terms of biological role, DNA-dependent RNA polymerase catalyzes the transcription of DNA into RNA using the four ribonucleoside triphosphates as substrates. The sequence is that of DNA-directed RNA polymerase subunit beta from Escherichia coli O81 (strain ED1a).